We begin with the raw amino-acid sequence, 311 residues long: 4-hydroxy-3-methylbut-2-enyl diphosphate reductase (311 aa).

Residue Cys14 participates in [4Fe-4S] cluster binding. The (2E)-4-hydroxy-3-methylbut-2-enyl diphosphate site is built by His43 and His76. Residues His43 and His76 each coordinate dimethylallyl diphosphate. Isopentenyl diphosphate is bound by residues His43 and His76. Cys98 is a [4Fe-4S] cluster binding site. A (2E)-4-hydroxy-3-methylbut-2-enyl diphosphate-binding site is contributed by His126. His126 lines the dimethylallyl diphosphate pocket. His126 is a binding site for isopentenyl diphosphate. The Proton donor role is filled by Glu128. Position 166 (Thr166) interacts with (2E)-4-hydroxy-3-methylbut-2-enyl diphosphate. Residue Cys196 participates in [4Fe-4S] cluster binding. Positions 224, 225, 226, and 268 each coordinate (2E)-4-hydroxy-3-methylbut-2-enyl diphosphate. Dimethylallyl diphosphate is bound by residues Ser224, Ser225, Asn226, and Ser268. Ser224, Ser225, Asn226, and Ser268 together coordinate isopentenyl diphosphate.

It belongs to the IspH family. It depends on [4Fe-4S] cluster as a cofactor.

It carries out the reaction isopentenyl diphosphate + 2 oxidized [2Fe-2S]-[ferredoxin] + H2O = (2E)-4-hydroxy-3-methylbut-2-enyl diphosphate + 2 reduced [2Fe-2S]-[ferredoxin] + 2 H(+). The catalysed reaction is dimethylallyl diphosphate + 2 oxidized [2Fe-2S]-[ferredoxin] + H2O = (2E)-4-hydroxy-3-methylbut-2-enyl diphosphate + 2 reduced [2Fe-2S]-[ferredoxin] + 2 H(+). Its pathway is isoprenoid biosynthesis; dimethylallyl diphosphate biosynthesis; dimethylallyl diphosphate from (2E)-4-hydroxy-3-methylbutenyl diphosphate: step 1/1. It participates in isoprenoid biosynthesis; isopentenyl diphosphate biosynthesis via DXP pathway; isopentenyl diphosphate from 1-deoxy-D-xylulose 5-phosphate: step 6/6. Its function is as follows. Catalyzes the conversion of 1-hydroxy-2-methyl-2-(E)-butenyl 4-diphosphate (HMBPP) into a mixture of isopentenyl diphosphate (IPP) and dimethylallyl diphosphate (DMAPP). Acts in the terminal step of the DOXP/MEP pathway for isoprenoid precursor biosynthesis. This chain is 4-hydroxy-3-methylbut-2-enyl diphosphate reductase, found in Chromobacterium violaceum (strain ATCC 12472 / DSM 30191 / JCM 1249 / CCUG 213 / NBRC 12614 / NCIMB 9131 / NCTC 9757 / MK).